The sequence spans 300 residues: Taste receptor type 2 member 105 (300 aa).

Residues M1 to G7 are Extracellular-facing. A helical transmembrane segment spans residues I8–A28. Topologically, residues L29–M43 are cytoplasmic. Residues T44–L64 traverse the membrane as a helical segment. Residues D65–Y87 lie on the Extracellular side of the membrane. Residues I88–F108 form a helical membrane-spanning segment. Topologically, residues L109–K128 are cytoplasmic. A helical membrane pass occupies residues A129–V149. Topologically, residues K150–N181 are extracellular. An N-linked (GlcNAc...) asparagine glycan is attached at N161. A helical membrane pass occupies residues I182 to L202. Over W203–S233 the chain is Cytoplasmic. A helical membrane pass occupies residues F234–I254. Residues P255 to L259 are Extracellular-facing. A helical membrane pass occupies residues L260–I280. Over L281–F300 the chain is Cytoplasmic.

Belongs to the G-protein coupled receptor T2R family. In terms of tissue distribution, expressed in subsets of taste receptor cells of the tongue and palate epithelium and exclusively in gustducin-positive cells. Expressed in gastric and duodenal tissues.

The protein localises to the membrane. Gustducin-coupled cycloheximide receptor implicated in the perception of bitter compounds in the oral cavity and the gastrointestinal tract. Signals through PLCB2 and the calcium-regulated cation channel TRPM5. This chain is Taste receptor type 2 member 105 (Tas2r105), found in Mus musculus (Mouse).